The sequence spans 484 residues: uncharacterized protein (484 aa).

Transmembrane regions (helical) follow at residues 19 to 39 (LSFG…MIFV), 78 to 98 (VNWG…WLIV), 111 to 131 (FFML…FIIL), 134 to 154 (IFAI…SNYL), 165 to 185 (FSPF…AGII), 199 to 219 (IVFL…IILG), 249 to 269 (TWYW…PFTF), 289 to 309 (ISVF…TIGL), 321 to 341 (ISTI…VFVL), 360 to 380 (LFLF…GVML), 398 to 418 (FGLI…ITSL), and 440 to 460 (LGAY…LALL).

The protein resides in the cell membrane. This is an uncharacterized protein from Mesomycoplasma hyopneumoniae (strain 232) (Mycoplasma hyopneumoniae).